Reading from the N-terminus, the 811-residue chain is Ribonucleoside-diphosphate reductase large chain (811 aa).

The 92-residue stretch at 1–92 (MFVYKRDGRQ…VSNLHKQTEK (92 aa)) folds into the ATP-cone domain. ATP is bound by residues 5 to 6 (KR), 11 to 17 (EKVAFDK), Thr53, and Asp57. GDP-binding residues include Ser202 and Ser217. Cys218 and Cys444 form a disulfide bridge. DTTP is bound by residues 226 to 228 (DSI), Lys243, Arg256, and 263 to 264 (AG). Asn427 is a binding site for GDP. Catalysis depends on Asn427, which acts as the Proton acceptor. Catalysis depends on Cys429, which acts as the Cysteine radical intermediate. GDP is bound by residues Glu431 and 603-606 (TAST). The active-site Proton acceptor is Glu431.

This sequence belongs to the ribonucleoside diphosphate reductase large chain family. In terms of assembly, heterodimer of a large and a small subunit. Interacts with SPD1.

It carries out the reaction a 2'-deoxyribonucleoside 5'-diphosphate + [thioredoxin]-disulfide + H2O = a ribonucleoside 5'-diphosphate + [thioredoxin]-dithiol. With respect to regulation, under complex allosteric control mediated by deoxynucleoside triphosphates and ATP binding to separate specificity and activation sites on the large subunit. The type of nucleotide bound at the specificity site determines substrate preference. It seems probable that ATP makes the enzyme reduce CDP and UDP, dGTP favors ADP reduction and dTTP favors GDP reduction. Stimulated by ATP and inhibited by dATP binding to the activity site. Its function is as follows. Provides the precursors necessary for DNA synthesis. Catalyzes the biosynthesis of deoxyribonucleotides from the corresponding ribonucleotides. The polypeptide is Ribonucleoside-diphosphate reductase large chain (cdc22) (Schizosaccharomyces pombe (strain 972 / ATCC 24843) (Fission yeast)).